A 315-amino-acid chain; its full sequence is Protein OPG185 (315 aa).

Positions 1-16 (MTRLPILLLLISLVYA) are cleaved as a signal peptide. An Ig-like V-type domain is found at 17-121 (TPFPQTSKKI…NDTDKVDYEE (105 aa)). Topologically, residues 17-279 (TPFPQTSKKI…SNYKTKDFVE (263 aa)) are virion surface. A disulfide bond links cysteine 34 and cysteine 103. N-linked (GlcNAc...) asparagine; by host glycosylation is found at asparagine 37, asparagine 69, asparagine 112, and asparagine 161. A compositionally biased stretch (polar residues) spans 193-202 (NTVSASSGES). The interval 193–213 (NTVSASSGESTTDETPEPITD) is disordered. Asparagine 254 is a glycosylation site (N-linked (GlcNAc...) asparagine; by host). Residues 280 to 303 (IFGITALIILSAVAIFCITYYIYN) traverse the membrane as a helical segment. Residues 304–315 (KRSRKYKTENKV) lie on the Intravirion side of the membrane.

This sequence belongs to the orthopoxvirus OPG185 family. In terms of assembly, heterodimerizes with OPG040. The heterodimer OPG185-OPG040 interacts with components of the entry fusion complex OPG143 and OPG094. Heterodimer with C3/VPC protein; disulfide-linked. Post-translationally, glycosylated; contains phosphate and sulfate-substituted glycans. O-glycosylation is required for hemagglutination and hemadsorption activities of infected cell membranes.

It is found in the virion membrane. Its subcellular location is the host membrane. Prevents cell to cell fusion by interacting with and directing the viral OPG040 protein on the host plasma membrane. The OPG185-OPG040 complex associates with components of the entry fusion complex (EFC) presumably to avoid superinfection and syncytium formation. Via its interaction with C3/VCP protein, protects the infected cell and probably also the extracellular enveloped virus from complement attack. This chain is Protein OPG185 (OPG185), found in Homo sapiens (Human).